Reading from the N-terminus, the 426-residue chain is Glutamate-1-semialdehyde 2,1-aminomutase (426 aa).

N6-(pyridoxal phosphate)lysine is present on lysine 265.

This sequence belongs to the class-III pyridoxal-phosphate-dependent aminotransferase family. HemL subfamily. As to quaternary structure, homodimer. It depends on pyridoxal 5'-phosphate as a cofactor.

Its subcellular location is the cytoplasm. It catalyses the reaction (S)-4-amino-5-oxopentanoate = 5-aminolevulinate. The protein operates within porphyrin-containing compound metabolism; protoporphyrin-IX biosynthesis; 5-aminolevulinate from L-glutamyl-tRNA(Glu): step 2/2. The polypeptide is Glutamate-1-semialdehyde 2,1-aminomutase (Escherichia coli O139:H28 (strain E24377A / ETEC)).